A 366-amino-acid chain; its full sequence is Histone-lysine N-methyltransferase SETD7 (366 aa).

MORN repeat units lie at residues 36–58 (FEGN…DGST), 59–81 (LEGY…DGGV), and 106–128 (FKGQ…DGGS). One can recognise an SET domain in the interval 214 to 336 (ERVYVADSLI…AEEELTVAYG (123 aa)). S-adenosyl-L-methionine-binding positions include 226–228 (AGE), Asn-296, His-297, and Glu-356.

It belongs to the class V-like SAM-binding methyltransferase superfamily. Histone-lysine methyltransferase family. SET7 subfamily. As to quaternary structure, interacts with IPF1/PDX-1.

It is found in the nucleus. The protein resides in the chromosome. The enzyme catalyses L-lysyl(4)-[histone H3] + S-adenosyl-L-methionine = N(6)-methyl-L-lysyl(4)-[histone H3] + S-adenosyl-L-homocysteine + H(+). It catalyses the reaction L-lysyl-[protein] + S-adenosyl-L-methionine = N(6)-methyl-L-lysyl-[protein] + S-adenosyl-L-homocysteine + H(+). In terms of biological role, histone methyltransferase that specifically monomethylates 'Lys-4' of histone H3. H3 'Lys-4' methylation represents a specific tag for epigenetic transcriptional activation. Plays a central role in the transcriptional activation of genes such as collagenase or insulin. Recruited by IPF1/PDX-1 to the insulin promoter, leading to activate transcription. Also has methyltransferase activity toward non-histone proteins such as CGAS, p53/TP53, TAF10, and possibly TAF7 by recognizing and binding the [KR]-[STA]-K in substrate proteins. Monomethylates 'Lys-189' of TAF10, leading to increase the affinity of TAF10 for RNA polymerase II. Monomethylates 'Lys-372' of p53/TP53, stabilizing p53/TP53 and increasing p53/TP53-mediated transcriptional activation. Monomethylates 'Lys-491' of CGAS, promoting interaction between SGF29 and CGAS. The protein is Histone-lysine N-methyltransferase SETD7 (Setd7) of Mus musculus (Mouse).